The sequence spans 30 residues: Cycloviolacin-O20 (30 aa).

The segment at residues Gly-1–Asp-30 is a cross-link (cyclopeptide (Gly-Asp)). 3 disulfide bridges follow: Cys-4–Cys-20, Cys-8–Cys-22, and Cys-13–Cys-27.

This is a cyclic peptide.

Its function is as follows. Probably participates in a plant defense mechanism. This Viola odorata (Sweet violet) protein is Cycloviolacin-O20.